We begin with the raw amino-acid sequence, 450 residues long: MTKYFGTDGVRGVANLELSPEMAFKLGRAGGYVLTKHADKNQRPKVLVARDTRISGQMLEQSLISGLLSVGIEVLSLGVITTPAVAYLIKVQEASAGIMISASHNPAIYNGIKFFGADGYKLPDATEEEIEAILDAPEDILPRPEGEGLGTVEEYPEGALKYTQFLEHTIPDDLEGLKVAVDGANGSTSGLISRVFADLETDFTTTATHPNGLNINDGVGSTHPENLVKKVLESGADMGLAFDGDGDRCIAVDELGNIIDGDKIMFILGHYLSEKGRLKQDTIVTTVMSNIGLYKAIEANGMKSAQTDVGDRHVVEEMREKGFNLGGEQSGHIIIFDYHNTGDGMLTGIQLMNVMKQTGKKLSELAAPVQTYPQKLVNLTVKDKDAWLTNDKIQAAIDTVEKEMNGDGRVLVRPSGTEPLLRVMCEAATEEKVNQYADQIAAVVQSEIGE.

Residue Ser103 is the Phosphoserine intermediate of the active site. The Mg(2+) site is built by Ser103, Asp243, Asp245, and Asp247. Ser103 carries the post-translational modification Phosphoserine.

It belongs to the phosphohexose mutase family. The cofactor is Mg(2+). In terms of processing, activated by phosphorylation.

It carries out the reaction alpha-D-glucosamine 1-phosphate = D-glucosamine 6-phosphate. Catalyzes the conversion of glucosamine-6-phosphate to glucosamine-1-phosphate. The sequence is that of Phosphoglucosamine mutase from Latilactobacillus sakei subsp. sakei (strain 23K) (Lactobacillus sakei subsp. sakei).